The primary structure comprises 286 residues: Polyamine aminopropyltransferase (286 aa).

The PABS domain maps to 5-238; the sequence is KIWHEKLHRH…GTMMFSWGTD (234 aa). Spermidine contacts are provided by His64 and Asp88. S-methyl-5'-thioadenosine-binding positions include Glu108 and 140–141; that span reads NG. Asp158 acts as the Proton acceptor in catalysis. 158 to 161 contacts spermidine; it reads DSTD.

Belongs to the spermidine/spermine synthase family. Homodimer or homotetramer.

It localises to the cytoplasm. It carries out the reaction S-adenosyl 3-(methylsulfanyl)propylamine + putrescine = S-methyl-5'-thioadenosine + spermidine + H(+). It participates in amine and polyamine biosynthesis; spermidine biosynthesis; spermidine from putrescine: step 1/1. Catalyzes the irreversible transfer of a propylamine group from the amino donor S-adenosylmethioninamine (decarboxy-AdoMet) to putrescine (1,4-diaminobutane) to yield spermidine. This is Polyamine aminopropyltransferase from Buchnera aphidicola subsp. Schizaphis graminum (strain Sg).